A 211-amino-acid chain; its full sequence is RING finger protein narya (211 aa).

The RING-type zinc finger occupies 6 to 47 (CNKCFRHRKTDPAVPFHLTQCRHVICGPCLGQSSLEKNCPLC). Residues 149-211 (RRRHSAGERF…FGSDTKGFRL (63 aa)) form a disordered region. The span at 153–165 (SAGERFHTPEFKE) shows a compositional bias: basic and acidic residues. A compositionally biased stretch (low complexity) spans 172–184 (STSDKSPSDMPSD).

May interact with itself, with nenya and vilya through its RING-type zinc finger. Expressed in nurse cell and pro-oocytes (at protein level).

It localises to the chromosome. In terms of biological role, required for the formation of DNA double-strand breaks (DSBs) together with nenya and vilya during the meiotic recombination process. Plays a role in DSBs processing into crossovers. Plays a redundant role with nenya in chromosome segregation during female meiosis. The sequence is that of RING finger protein narya from Drosophila melanogaster (Fruit fly).